An 88-amino-acid chain; its full sequence is Small ribosomal subunit protein uS15c (88 aa).

Belongs to the universal ribosomal protein uS15 family. As to quaternary structure, part of the 30S ribosomal subunit.

It is found in the plastid. Its subcellular location is the chloroplast. The polypeptide is Small ribosomal subunit protein uS15c (rps15) (Pinus thunbergii (Japanese black pine)).